A 255-amino-acid chain; its full sequence is Acetylglutamate kinase (255 aa).

Residues 40–41 (GG), arginine 62, and asparagine 153 contribute to the substrate site.

It belongs to the acetylglutamate kinase family. ArgB subfamily.

It is found in the cytoplasm. It catalyses the reaction N-acetyl-L-glutamate + ATP = N-acetyl-L-glutamyl 5-phosphate + ADP. The protein operates within amino-acid biosynthesis; L-arginine biosynthesis; N(2)-acetyl-L-ornithine from L-glutamate: step 2/4. Functionally, catalyzes the ATP-dependent phosphorylation of N-acetyl-L-glutamate. This Bacillus mycoides (strain KBAB4) (Bacillus weihenstephanensis) protein is Acetylglutamate kinase.